The sequence spans 233 residues: Sugar fermentation stimulation protein homolog (233 aa).

It belongs to the SfsA family.

The polypeptide is Sugar fermentation stimulation protein homolog (Rhodospirillum centenum (strain ATCC 51521 / SW)).